Consider the following 152-residue polypeptide: Putative pseudoazurin (152 aa).

Residues 1 to 23 form the signal peptide; sequence MPLKFGLIVATAALIASAASLMA. The region spanning 28-116 is the Plastocyanin-like domain; sequence VQMLNKGTDG…MGMVALIQVG (89 aa). Positions 63, 101, 104, and 109 each coordinate Cu cation.

It depends on Cu cation as a cofactor.

The protein localises to the periplasm. Functionally, this soluble electron transfer copper protein is required for the inactivation of copper-containing nitrite reductase in the presence of oxygen. This is Putative pseudoazurin (azu) from Rhizobium leguminosarum bv. viciae.